The following is a 91-amino-acid chain: Small ribosomal subunit protein bS18 (91 aa).

It belongs to the bacterial ribosomal protein bS18 family. In terms of assembly, part of the 30S ribosomal subunit. Forms a tight heterodimer with protein bS6.

In terms of biological role, binds as a heterodimer with protein bS6 to the central domain of the 16S rRNA, where it helps stabilize the platform of the 30S subunit. The protein is Small ribosomal subunit protein bS18 of Burkholderia vietnamiensis (strain G4 / LMG 22486) (Burkholderia cepacia (strain R1808)).